A 170-amino-acid polypeptide reads, in one-letter code: Lipoprotein signal peptidase (170 aa).

The next 3 helical transmembrane spans lie at 12 to 32 (WYWVVVLVFLADQLSKQWVLA), 67 to 87 (WQRWLFTIVAVGFSSLLTVWL), and 93 to 113 (SLLKLNLAYTLVIGGALGNLV). Active-site residues include Asp123 and Asp141. A helical transmembrane segment spans residues 137–157 (FNIADSAIFIGAVLIIWDSFF).

It belongs to the peptidase A8 family.

It is found in the cell inner membrane. The enzyme catalyses Release of signal peptides from bacterial membrane prolipoproteins. Hydrolyzes -Xaa-Yaa-Zaa-|-(S,diacylglyceryl)Cys-, in which Xaa is hydrophobic (preferably Leu), and Yaa (Ala or Ser) and Zaa (Gly or Ala) have small, neutral side chains.. It functions in the pathway protein modification; lipoprotein biosynthesis (signal peptide cleavage). Its function is as follows. This protein specifically catalyzes the removal of signal peptides from prolipoproteins. The chain is Lipoprotein signal peptidase from Shewanella oneidensis (strain ATCC 700550 / JCM 31522 / CIP 106686 / LMG 19005 / NCIMB 14063 / MR-1).